A 407-amino-acid polypeptide reads, in one-letter code: Dual-specificity RNA methyltransferase RlmN (407 aa).

Glu-136 serves as the catalytic Proton acceptor. A Radical SAM core domain is found at 144–378 (REDRGAVCIS…MDAGFASPIR (235 aa)). Cys-151 and Cys-389 are oxidised to a cystine. Residues Cys-158, Cys-162, and Cys-165 each contribute to the [4Fe-4S] cluster site. S-adenosyl-L-methionine is bound by residues 215 to 216 (GE), Ser-247, 269 to 271 (SLH), and Asn-346. The active-site S-methylcysteine intermediate is the Cys-389.

Belongs to the radical SAM superfamily. RlmN family. Requires [4Fe-4S] cluster as cofactor.

The protein resides in the cytoplasm. It catalyses the reaction adenosine(2503) in 23S rRNA + 2 reduced [2Fe-2S]-[ferredoxin] + 2 S-adenosyl-L-methionine = 2-methyladenosine(2503) in 23S rRNA + 5'-deoxyadenosine + L-methionine + 2 oxidized [2Fe-2S]-[ferredoxin] + S-adenosyl-L-homocysteine. The enzyme catalyses adenosine(37) in tRNA + 2 reduced [2Fe-2S]-[ferredoxin] + 2 S-adenosyl-L-methionine = 2-methyladenosine(37) in tRNA + 5'-deoxyadenosine + L-methionine + 2 oxidized [2Fe-2S]-[ferredoxin] + S-adenosyl-L-homocysteine. In terms of biological role, specifically methylates position 2 of adenine 2503 in 23S rRNA and position 2 of adenine 37 in tRNAs. m2A2503 modification seems to play a crucial role in the proofreading step occurring at the peptidyl transferase center and thus would serve to optimize ribosomal fidelity. The protein is Dual-specificity RNA methyltransferase RlmN of Gluconobacter oxydans (strain 621H) (Gluconobacter suboxydans).